The primary structure comprises 856 residues: Mechanosensitive ion channel protein 6 (856 aa).

2 disordered regions span residues 45–86 and 116–226; these read GEGN…DPPT and RGLT…PFAA. Composition is skewed to basic and acidic residues over residues 70–85 and 129–140; these read QQKD…EDPP and TKRDPVGRRDSR. The span at 155–168 shows a compositional bias: polar residues; the sequence is SGNNAPIQRSSSTL. Serine 211 carries the phosphoserine modification. The span at 217–226 shows a compositional bias: acidic residues; the sequence is EEEEDDPFAA. Helical transmembrane passes span 242–262, 283–303, 323–343, and 360–380; these read IVLE…TLAI, LVLI…VFFI, AVQN…LFDE, and IFVC…LVKV. Position 462 is a phosphoserine (serine 462). Helical transmembrane passes span 615-635 and 651-671; these read MVNI…LGIT and AFIF…LFVI.

The protein belongs to the MscS (TC 1.A.23) family.

It localises to the membrane. Its function is as follows. Mechanosensitive channel that opens in response to stretch forces in the membrane lipid bilayer. The polypeptide is Mechanosensitive ion channel protein 6 (MSL6) (Arabidopsis thaliana (Mouse-ear cress)).